The following is a 473-amino-acid chain: Trigger factor (473 aa).

One can recognise a PPIase FKBP-type domain in the interval 162–243 (GDFVSIDLSA…VKSIKVRELP (82 aa)). Residues 433-473 (TAEFFGPSGEQAEAEQDEAAPAEDATEETDADSDEAADDSK) are disordered. A compositionally biased stretch (acidic residues) spans 444–473 (AEAEQDEAAPAEDATEETDADSDEAADDSK).

Belongs to the FKBP-type PPIase family. Tig subfamily.

Its subcellular location is the cytoplasm. It catalyses the reaction [protein]-peptidylproline (omega=180) = [protein]-peptidylproline (omega=0). In terms of biological role, involved in protein export. Acts as a chaperone by maintaining the newly synthesized protein in an open conformation. Functions as a peptidyl-prolyl cis-trans isomerase. This is Trigger factor from Mycolicibacterium vanbaalenii (strain DSM 7251 / JCM 13017 / BCRC 16820 / KCTC 9966 / NRRL B-24157 / PYR-1) (Mycobacterium vanbaalenii).